A 358-amino-acid polypeptide reads, in one-letter code: Myb family transcription factor IPN2 (358 aa).

Positions 1-20 are disordered; that stretch reads MERMFPPKKPSTMNSHDRPM. One can recognise an HTH myb-type domain in the interval 32 to 92; the sequence is TDPKPRLRWT…HLQKFRLGKQ (61 aa). A DNA-binding region (H-T-H motif) is located at residues 63 to 88; sequence PKTIMRVMGVKGLTLYHLKSHLQKFR. The stretch at 127-171 forms a coiled coil; it reads NMNEMQIEVQRRLHEQLEVQKHLQLRIEAQGKYMQSILEKAYQTL. Positions 139-144 match the LHEQLE motif; that stretch reads LHEQLE. A disordered region spans residues 310–358; the sequence is IYDSKPEEKKFDASMKLERPSPRRAPLGERMSPMITTGTMAQGRSSPFG. The span at 311 to 330 shows a compositional bias: basic and acidic residues; that stretch reads YDSKPEEKKFDASMKLERPS. The span at 343–358 shows a compositional bias: polar residues; sequence MITTGTMAQGRSSPFG.

Belongs to the MYB-CC family. In terms of assembly, interacts with NSP2. Expressed in leaves, stems, nodules and roots.

Its subcellular location is the nucleus. Transcriptional regulator required for Nod-factor-induced gene expression. Transcription activator involved in the induction of NIN and ENOD40 genes, which are required for rhizobial infection and early nodule development. Possesses strong transactivation activity in vitro. Does not seem to contribute to the early steps of the arbuscular mycorrhizal fungus infection and colonization processes in roots. The protein is Myb family transcription factor IPN2 of Lotus japonicus (Lotus corniculatus var. japonicus).